We begin with the raw amino-acid sequence, 280 residues long: Hydroxyethylthiazole kinase (280 aa).

Residue M58 coordinates substrate. An ATP-binding site is contributed by R129. A206 contacts substrate.

This sequence belongs to the Thz kinase family. Mg(2+) serves as cofactor.

It carries out the reaction 5-(2-hydroxyethyl)-4-methylthiazole + ATP = 4-methyl-5-(2-phosphooxyethyl)-thiazole + ADP + H(+). Its pathway is cofactor biosynthesis; thiamine diphosphate biosynthesis; 4-methyl-5-(2-phosphoethyl)-thiazole from 5-(2-hydroxyethyl)-4-methylthiazole: step 1/1. In terms of biological role, thiazole kinase involved in thiamine salvage pathway. The sequence is that of Hydroxyethylthiazole kinase (THIM) from Zea mays (Maize).